A 209-amino-acid chain; its full sequence is Vacuolar protein sorting-associated protein 28 homolog (209 aa).

The 105-residue stretch at 1–105 folds into the VPS28 N-terminal domain; sequence MSQNSNLMRE…REGRPITVKD (105 aa). The VPS28 C-terminal domain maps to 109–205; the sequence is NVLKHIASIV…AYQSFQKALN (97 aa).

It belongs to the VPS28 family. Component of the ESCRT-I complex (endosomal sorting complex required for transport I).

It is found in the endosome. Its function is as follows. Component of the ESCRT-I complex, a regulator of vesicular trafficking process. This is Vacuolar protein sorting-associated protein 28 homolog from Caenorhabditis briggsae.